A 286-amino-acid chain; its full sequence is NAD kinase (286 aa).

Residue aspartate 74 is the Proton acceptor of the active site. NAD(+) is bound by residues 74-75, 148-149, aspartate 178, alanine 186, 189-194, and glutamine 244; these read DG, ND, and TAYNLS.

This sequence belongs to the NAD kinase family. A divalent metal cation serves as cofactor.

It is found in the cytoplasm. The enzyme catalyses NAD(+) + ATP = ADP + NADP(+) + H(+). Functionally, involved in the regulation of the intracellular balance of NAD and NADP, and is a key enzyme in the biosynthesis of NADP. Catalyzes specifically the phosphorylation on 2'-hydroxyl of the adenosine moiety of NAD to yield NADP. This is NAD kinase from Campylobacter jejuni subsp. jejuni serotype O:23/36 (strain 81-176).